The chain runs to 432 residues: Alpha-2 adrenergic receptor (432 aa).

The Extracellular segment spans residues 1–32 (MDPLNATGMDAFTAIHLNASWSADSGYSLAAI). Residues Asn-5 and Asn-18 are each glycosylated (N-linked (GlcNAc...) asparagine). Residues 33-57 (ASIAALVSFLILFTVVGNILVVIAV) form a helical membrane-spanning segment. At 58 to 69 (LTSRALKAPQNL) the chain is on the cytoplasmic side. Residues 70-95 (FLVSLATADILVATLVMPFSLANELM) form a helical membrane-spanning segment. Residues 96–105 (GYWYFGKVWC) are Extracellular-facing. Cys-105 and Cys-183 are oxidised to a cystine. A helical membrane pass occupies residues 106–128 (GIYLALDVLFCTSSIVHLCAISL). Over 129 to 149 (DRYWSVTQAVEYNLKRTPKRV) the chain is Cytoplasmic. Residues 150–172 (KCIIVIVWLISAFISSPPLLSID) form a helical membrane-spanning segment. The Extracellular segment spans residues 173–188 (SNNYISSQPQCMLNDD). The helical transmembrane segment at 189 to 212 (TWYILSSSMASFFAPCLIMILVYI) threads the bilayer. Topologically, residues 213–356 (RIYQVAKTRT…QAREKRFTFV (144 aa)) are cytoplasmic. The interval 222–319 (TRSMSGKEPR…SISKQSARIS (98 aa)) is disordered. Polar residues-rich tracts occupy residues 235 to 246 (VTQTENGLNKAN) and 265 to 275 (SQRTVTIGQQT). The segment covering 288–300 (GKGHKPQRQDSQR) has biased composition (basic and acidic residues). A compositionally biased stretch (polar residues) spans 309–319 (SSISKQSARIS). The chain crosses the membrane as a helical span at residues 357-380 (LAVVMGVFVVCWFPFFFSYSLHAV). At 381-393 (CRDYCKIPDTLFK) the chain is on the extracellular side. A helical membrane pass occupies residues 394-413 (FFWIGYCNSSLNPAIYTIFN). Residues 414-432 (RDFRRAFQKILCKSWKKSF) lie on the Cytoplasmic side of the membrane.

This sequence belongs to the G-protein coupled receptor 1 family.

The protein resides in the cell membrane. In terms of biological role, alpha-2 adrenergic receptors mediate the catecholamine-induced inhibition of adenylate cyclase through the action of G proteins. In Labrus ossifagus (Cuckoo wrasse), this protein is Alpha-2 adrenergic receptor.